The following is a 256-amino-acid chain: Calsenilin (256 aa).

A disordered region spans residues 1-22; sequence MQRTKEAVKASDGNLLGDPGRI. Lysine 26 participates in a covalent cross-link: Glycyl lysine isopeptide (Lys-Gly) (interchain with G-Cter in SUMO1). 2 S-palmitoyl cysteine lipidation sites follow: cysteine 45 and cysteine 46. Phosphoserine occurs at positions 60 and 63. One can recognise an EF-hand 1; degenerate domain in the interval 67 to 123; the sequence is LELSTVRHQPEGLDQLQAQTKFTKKELQSLYRGFKNECPTGLVDEDTFKLIYSQFFP. Lysine 90 participates in a covalent cross-link: Glycyl lysine isopeptide (Lys-Gly) (interchain with G-Cter in SUMO1). 3 EF-hand domains span residues 126 to 161, 162 to 197, and 210 to 245; these read DATT…LLRG, TVHE…IYDM, and APLE…DENI. 9 residues coordinate Ca(2+): aspartate 175, asparagine 177, aspartate 179, cysteine 181, glutamate 186, aspartate 223, asparagine 225, aspartate 227, and glutamate 234. The interaction with KCND2 stretch occupies residues 243–256; it reads ENIMNSMQLFENVI.

This sequence belongs to the recoverin family. As to quaternary structure, binds to DNA as a homomultimer. Dimerization is induced by binding to calcium. Interacts with the C-terminus of PSEN1 and PSEN2 and with PSEN2 CTF subunit. Associates with KCN1. Component of heteromultimeric potassium channels. Identified in potassium channel complexes containing KCND1, KCND2, KCND3, KCNIP1, KCNIP2, KCNIP3, KCNIP4, DPP6 and DPP10. Interacts with KCND2 and KCND3. Palmitoylated. Palmitoylation enhances association with the plasma membrane. Post-translationally, proteolytically cleaved by caspase-3. In terms of tissue distribution, highly expressed in brain. Isoform 1 or isoform 4 (T+ forms) are expressed at equal levels with isoform 2 or isoform 3 (T- forms). Primarily detected in the layer V and deep layer VI of the cerebral cortex, the hippocampus, and the entire cerebellum. Expressed at low levels in testis. Also expressed in heart.

The protein resides in the cytoplasm. It localises to the cell membrane. Its subcellular location is the endoplasmic reticulum. It is found in the golgi apparatus. The protein localises to the nucleus. Functionally, calcium-dependent transcriptional repressor that binds to the DRE element of genes including PDYN and FOS. Affinity for DNA is reduced upon binding to calcium and enhanced by binding to magnesium. Seems to be involved in nociception. Regulatory subunit of Kv4/D (Shal)-type voltage-gated rapidly inactivating A-type potassium channels, such as KCND2/Kv4.2 and KCND3/Kv4.3. Modulates channel expression at the cell membrane, gating characteristics, inactivation kinetics and rate of recovery from inactivation in a calcium-dependent and isoform-specific manner. Its function is as follows. May play a role in the regulation of PSEN2 proteolytic processing and apoptosis. Together with PSEN2 involved in modulation of amyloid-beta formation. This Mus musculus (Mouse) protein is Calsenilin (Kcnip3).